We begin with the raw amino-acid sequence, 306 residues long: Acyl transferase (306 aa).

Active-site charge relay system residues include serine 117, aspartate 214, and histidine 244.

It belongs to the LuxD family.

The protein operates within lipid metabolism; fatty acid reduction for biolumincescence. Functionally, acyl transferase is part of the fatty acid reductase system required for aldehyde biosynthesis; it produces fatty acids for the luminescent reaction. In Photobacterium phosphoreum, this protein is Acyl transferase.